The primary structure comprises 194 residues: Fe/S biogenesis protein NfuA (194 aa).

The [4Fe-4S] cluster site is built by C152 and C155.

Belongs to the NfuA family. As to quaternary structure, homodimer. It depends on [4Fe-4S] cluster as a cofactor.

Functionally, involved in iron-sulfur cluster biogenesis. Binds a 4Fe-4S cluster, can transfer this cluster to apoproteins, and thereby intervenes in the maturation of Fe/S proteins. Could also act as a scaffold/chaperone for damaged Fe/S proteins. This is Fe/S biogenesis protein NfuA from Pseudomonas entomophila (strain L48).